Consider the following 876-residue polypeptide: MELASKYNPADVEGKWYQYWLDHKLFSSKPDGREPYTIVIPPPNVTGVLHMGHMLNNTIQDILVRRARMEGKNACWVPGTDHASIATEAKVVNKLAAQGIKKTDLSRDEFLKHAWAWTDEHGGIILKQLRKLGASCDWDRTAFTMDEKRSESVLKVFVDLYNKGLIYRGVRMVNWDPKALTALSDEEVIYKEEHGKLFYLRYKIEGEDGYAVVATTRPETIMGDTAMCINPNDPKNQHLKGKKVIVPLVGRVIPVIEDDYVDIEFGTGCLKVTPAHDVNDYMLGEKYNLPSIDIFNDNGTISEAAGMYIGMDRFDVRKQIEKDLEAAGLLEKTEAYTNKVGYSERTNVVIEPKLSMQWFLKMEHLAQIALEPVMKDDIKFYPAKYKNTYRHWMENIKDWCISRQLWWGHRIPAYFLPEGGYVVAVTDEEALKLAREKTGNPNLKMTDLRQDEDCLDTWFSSWLWPISLFDGINNPGNEEINYYYPTSDLVTGPDIIFFWVARMIMAGYEYEGKMPFKNVYFTGIVRDKLGRKMSKSLGNSPDPLELIEKYGADGVRMGMMLSAPAGNDILFDDALCEQGRNFCNKIWNAFRLVKGWENGMGTIDIPADAHLAVQWFDQRLDAAAVEVADLFSKYRLSEALMLIYKLFWDEFSSWLLEIVKPAYGQPVNGFIYSMTLSAFERLLAMLHPFMPFITEELWQQLREREPGASLMVQPLGEPGEVNEEFLQQFETAKEIISSVRTIRLQKNIALKEPLELQVVGANPVEKMNPVIRKMCNLSAIEVVDAKADGASSFMIGTTEFAVPLGNMIDVDAEIARMEAELKHKEGFLQGVLKKLSNEKFVNNAPAAVIEMERKKQADAESIIQSLKESIASLKNV.

Positions 43–53 (PNVTGVLHMGH) match the 'HIGH' region motif. A 'KMSKS' region motif is present at residues 532–536 (KMSKS). ATP is bound at residue Lys535. 2 coiled-coil regions span residues 805–826 (GNMIDVDAEIARMEAELKHKEG) and 853–875 (RKKQADAESIIQSLKESIASLKN).

It belongs to the class-I aminoacyl-tRNA synthetase family. ValS type 1 subfamily. In terms of assembly, monomer.

The protein resides in the cytoplasm. It catalyses the reaction tRNA(Val) + L-valine + ATP = L-valyl-tRNA(Val) + AMP + diphosphate. Its function is as follows. Catalyzes the attachment of valine to tRNA(Val). As ValRS can inadvertently accommodate and process structurally similar amino acids such as threonine, to avoid such errors, it has a 'posttransfer' editing activity that hydrolyzes mischarged Thr-tRNA(Val) in a tRNA-dependent manner. This is Valine--tRNA ligase from Bacteroides fragilis (strain ATCC 25285 / DSM 2151 / CCUG 4856 / JCM 11019 / LMG 10263 / NCTC 9343 / Onslow / VPI 2553 / EN-2).